We begin with the raw amino-acid sequence, 105 residues long: Large ribosomal subunit protein uL24 (105 aa).

This sequence belongs to the universal ribosomal protein uL24 family. As to quaternary structure, part of the 50S ribosomal subunit.

Its function is as follows. One of two assembly initiator proteins, it binds directly to the 5'-end of the 23S rRNA, where it nucleates assembly of the 50S subunit. In terms of biological role, one of the proteins that surrounds the polypeptide exit tunnel on the outside of the subunit. The polypeptide is Large ribosomal subunit protein uL24 (Thermotoga maritima (strain ATCC 43589 / DSM 3109 / JCM 10099 / NBRC 100826 / MSB8)).